The chain runs to 297 residues: UBX domain-containing protein 1 (297 aa).

The residue at position 2 (Ala-2) is an N-acetylalanine. The UBA domain occupies 2-42 (AELTALESLIEMGFPRGRAEKALALTGNQGIEAAMDWLMEH). The interval 38–214 (WLMEHEDDPD…PPTKREYDQC (177 aa)) is disordered. Residues 42–52 (HEDDPDVDEPL) are compositionally biased toward acidic residues. The interaction with BRCA1 stretch occupies residues 43–297 (EDDPDVDEPL…VLIVAKKCPS (255 aa)). Basic and acidic residues-rich tracts occupy residues 86–122 (LTEEERQEQTKRMLELVAQKQREREEREEREALEREK) and 137–177 (KLQE…ERAK). Ser-199 carries the phosphoserine modification. The residue at position 200 (Ser-200) is a Phosphoserine; by MAPK12. 2 positions are modified to phosphothreonine: Thr-207 and Thr-229. Residues 209 to 291 (REYDQCRIQV…GLVPSAVLIV (83 aa)) enclose the UBX domain. Phosphoserine is present on Ser-270.

In terms of assembly, interacts with MAVS; this interaction prevents MAVS oligomerization and thus disrupts the RLR signaling pathway. Interacts with CUL1; this interaction inhibits CUL1-mediated degradation of NF-kappa-B inhibitors. Interacts with BIRC2/c-IAP1; this interaction prevents TNFalpha-stimulated RIP1 ubiquitination and subsequent NF-kappa-B activation. Component of a complex required to couple retrotranslocation, ubiquitination and deglycosylation composed of NGLY1, SAKS1, AMFR, VCP and RAD23B. Interacts with HOMER2. Interacts directly with VCP. Interacts with BRCA1 and BARD1; interaction takes place when BRCA1 is not autoubiquitinated but is strongly enhanced in the presence of autoubiquitinated BRCA1.

It is found in the cytoplasm. Its function is as follows. Ubiquitin-binding protein that plays a role in the modulation of innate immune response. Blocks both the RIG-I-like receptors (RLR) and NF-kappa-B pathways. Following viral infection, UBXN1 is induced and recruited to the RLR component MAVS. In turn, interferes with MAVS oligomerization, and disrupts the MAVS/TRAF3/TRAF6 signalosome. This function probably serves as a brake to prevent excessive RLR signaling. Interferes with the TNFalpha-triggered NF-kappa-B pathway by interacting with cellular inhibitors of apoptosis proteins (cIAPs) and thereby inhibiting their recruitment to TNFR1. Also prevents the activation of NF-kappa-B by associating with CUL1 and thus inhibiting NF-kappa-B inhibitor alpha/NFKBIA degradation that remains bound to NF-kappa-B. Interacts with the BRCA1-BARD1 heterodimer and regulates its activity. Specifically binds 'Lys-6'-linked polyubiquitin chains. Interaction with autoubiquitinated BRCA1 leads to the inhibition of the E3 ubiquitin-protein ligase activity of the BRCA1-BARD1 heterodimer. Component of a complex required to couple deglycosylation and proteasome-mediated degradation of misfolded proteins in the endoplasmic reticulum that are retrotranslocated in the cytosol. The sequence is that of UBX domain-containing protein 1 (Ubxn1) from Mus musculus (Mouse).